Reading from the N-terminus, the 330-residue chain is Adenylate isopentenyltransferase 8, chloroplastic (330 aa).

The N-terminal 35 residues, 1 to 35 (MQNLTSTFVSPSMIPITSPRLRLPPPRSVVPMTTV), are a transit peptide targeting the chloroplast. 50–57 (GATGSGKS) provides a ligand contact to ATP.

Belongs to the IPP transferase family. As to expression, expressed in roots and in immature seeds with highest expression in the chalazal endosperm.

Its subcellular location is the plastid. The protein resides in the chloroplast. It carries out the reaction dimethylallyl diphosphate + ADP = N(6)-(dimethylallyl)adenosine 5'-diphosphate + diphosphate. The catalysed reaction is dimethylallyl diphosphate + ATP = N(6)-(dimethylallyl)adenosine 5'-triphosphate + diphosphate. In terms of biological role, involved in cytokinin biosynthesis. Catalyzes the transfer of an isopentenyl group from dimethylallyl diphosphate (DMAPP) to ATP and ADP. The protein is Adenylate isopentenyltransferase 8, chloroplastic (IPT8) of Arabidopsis thaliana (Mouse-ear cress).